The following is a 353-amino-acid chain: C-X-C chemokine receptor type 4 (353 aa).

Residues 1–22 (MEELHIYPSDNYTEEDLGSGDY) form an important for chemokine binding and signaling region. Residues 1 to 39 (MEELHIYPSDNYTEEDLGSGDYDSMKEPCFREENAHFNR) are Extracellular-facing. A Sulfotyrosine modification is found at Tyr7. Asn11 carries N-linked (GlcNAc...) asparagine glycosylation. At Tyr12 the chain carries Sulfotyrosine. A glycan (O-linked (Xyl...) (chondroitin sulfate) serine) is linked at Ser19. The residue at position 22 (Tyr22) is a Sulfotyrosine. 2 disulfides stabilise this stretch: Cys29–Cys275 and Cys110–Cys187. The chain crosses the membrane as a helical span at residues 40–64 (IFLPTVYSIIFLTGIVGNGLVILVM). Residues 65–78 (GYQKKLRSMTDKYR) are Cytoplasmic-facing. Residues 79 to 100 (LHLSVADLLFVLTLPFWAVEAV) traverse the membrane as a helical segment. A chemokine binding region spans residues 95 to 98 (WAVE). Residues 101-111 (ANWYFGNFLCK) lie on the Extracellular side of the membrane. The chain crosses the membrane as a helical span at residues 112-131 (AVHVIYTVNLYSSVLILAFI). The chemokine binding stretch occupies residues 114–118 (HVIYT). At 132 to 155 (SLDRYLAIVHATNSQRPRKLLAEK) the chain is on the cytoplasmic side. Residues 134-136 (DRY) carry the Important for signaling motif. The tract at residues 136-148 (YLAIVHATNSQRP) is involved in dimerization; when bound to chemokine. The helical transmembrane segment at 156–175 (VVYVGVWIPALLLTIPDFIF) threads the bilayer. At 176–196 (ANVREADDRYICDRFYPNDSW) the chain is on the extracellular side. Residues 187–191 (CDRFY) are chemokine binding, important for signaling. The tract at residues 192–211 (PNDSWLVVFQFQHIMVGLIL) is involved in dimerization. A helical membrane pass occupies residues 197–217 (LVVFQFQHIMVGLILPGIVIL). Residues 218–242 (SCYCIIISKLSHSKGYQKRKALKTT) lie on the Cytoplasmic side of the membrane. A helical membrane pass occupies residues 243–262 (VILILAFFACWLPYYIGISI). The Extracellular segment spans residues 263–283 (DSFILLEIIKQGCEFEKTVHK). Residues 267 to 269 (LLE) form an involved in dimerization region. The helical transmembrane segment at 284 to 303 (WISITEALAFFHCCLNPILY) threads the bilayer. The Cytoplasmic portion of the chain corresponds to 304–353 (AFLGAKFKTSAQHALTSVSRGSSLKILSKGKRGGHSSVSTESESSSFHSS). Residues Ser320 and Ser322 each carry the phosphoserine modification. Phosphoserine; by PKC and GRK6 is present on residues Ser325 and Ser326. Positions 330–353 (LSKGKRGGHSSVSTESESSSFHSS) are disordered. At Ser331 the chain carries Phosphoserine; by GRK6. Lys332 is covalently cross-linked (Glycyl lysine isopeptide (Lys-Gly) (interchain with G-Cter in ubiquitin)). Over residues 338–353 (HSSVSTESESSSFHSS) the composition is skewed to low complexity. At Ser340 the chain carries Phosphoserine; by GRK6. Residues Ser349 and Ser352 each carry the phosphoserine modification.

It belongs to the G-protein coupled receptor 1 family. In terms of assembly, monomer. Can form homodimers. Interacts with CD164. Interacts with ARRB2; the interaction is dependent on the C-terminal phosphorylation of CXCR4 and allows activation of MAPK1 and MAPK3. Interacts with ARR3; the interaction is dependent on the C-terminal phosphorylation of CXCR4 and modulates calcium mobilization. Interacts with RNF113A; the interaction, enhanced by CXCL12, promotes CXCR4 ubiquitination and subsequent degradation. Interacts (via the cytoplasmic C-terminal) with ITCH (via the WW domains I and II); the interaction, enhanced by CXCL12, promotes CXCR4 ubiquitination and leads to its degradation. Interacts with extracellular ubiquitin. Interacts with DBN1; this interaction is enhanced by antigenic stimulation. Following LPS binding, may form a complex with GDF5, HSP90AA1 and HSPA8. Post-translationally, phosphorylated on agonist stimulation. Rapidly phosphorylated on serine and threonine residues in the C-terminal. Phosphorylation at Ser-325 and Ser-326 leads to recruitment of ITCH, ubiquitination and protein degradation. In terms of processing, ubiquitinated after ligand binding, leading to its degradation. Ubiquitinated by ITCH at the cell membrane on agonist stimulation. The ubiquitin-dependent mechanism, endosomal sorting complex required for transport (ESCRT), then targets CXCR4 for lysosomal degradation. This process is dependent also on prior Ser-/Thr-phosphorylation in the C-terminal of CXCR4. Also binding of ARRB1 to STAM negatively regulates CXCR4 sorting to lysosomes though modulating ubiquitination of SFR5S. Sulfation is required for efficient binding of CXCL12/SDF-1alpha and promotes its dimerization. Post-translationally, O- and N-glycosylated. N-glycosylation can mask coreceptor function. The O-glycosylation chondroitin sulfate attachment does not affect interaction with CXCL12/SDF-1alpha nor its coreceptor activity.

The protein localises to the cell membrane. Its subcellular location is the cell junction. The protein resides in the early endosome. It localises to the late endosome. It is found in the lysosome. Its function is as follows. Receptor for the C-X-C chemokine CXCL12/SDF-1 that transduces a signal by increasing intracellular calcium ion levels and enhancing MAPK1/MAPK3 activation. Involved in the AKT signaling cascade. Plays a role in regulation of cell migration, e.g. during wound healing. Acts as a receptor for extracellular ubiquitin; leading to enhanced intracellular calcium ions and reduced cellular cAMP levels. Binds bacterial lipopolysaccharide (LPS) et mediates LPS-induced inflammatory response, including TNF secretion by monocytes. Involved in hematopoiesis and in cardiac ventricular septum formation. Also plays an essential role in vascularization of the gastrointestinal tract, probably by regulating vascular branching and/or remodeling processes in endothelial cells. Involved in cerebellar development. In the CNS, could mediate hippocampal-neuron survival. This is C-X-C chemokine receptor type 4 (CXCR4) from Canis lupus familiaris (Dog).